We begin with the raw amino-acid sequence, 376 residues long: Chaperone protein DnaJ (376 aa).

In terms of domain architecture, J spans 5–70 (DFYEVLGVER…SKRAAYDQYG (66 aa)). The CR-type zinc finger occupies 135–213 (GTTVTIRVPT…CHGQGRVEEQ (79 aa)). Zn(2+)-binding residues include Cys-148, Cys-151, Cys-165, Cys-168, Cys-187, Cys-190, Cys-201, and Cys-204. CXXCXGXG motif repeat units lie at residues 148–155 (CKTCDGSG), 165–172 (CTTCGGIG), 187–194 (CPRCHGSG), and 201–208 (CGSCHGQG).

This sequence belongs to the DnaJ family. Homodimer. Requires Zn(2+) as cofactor.

The protein localises to the cytoplasm. In terms of biological role, participates actively in the response to hyperosmotic and heat shock by preventing the aggregation of stress-denatured proteins and by disaggregating proteins, also in an autonomous, DnaK-independent fashion. Unfolded proteins bind initially to DnaJ; upon interaction with the DnaJ-bound protein, DnaK hydrolyzes its bound ATP, resulting in the formation of a stable complex. GrpE releases ADP from DnaK; ATP binding to DnaK triggers the release of the substrate protein, thus completing the reaction cycle. Several rounds of ATP-dependent interactions between DnaJ, DnaK and GrpE are required for fully efficient folding. Also involved, together with DnaK and GrpE, in the DNA replication of plasmids through activation of initiation proteins. This is Chaperone protein DnaJ from Stutzerimonas stutzeri (Pseudomonas stutzeri).